A 302-amino-acid polypeptide reads, in one-letter code: MAEQQAFHSGFVAIIGRPNVGKSTLLNRVVGQKVAIMSDKAQTTRNRIQGIYTTADTQMVFIDTPGIHKPHSRLGDFMVKSALSTLGEVDAVLFMINADERRGAGDNFIIDRLKTVKQPIYLVINKIDQVHPDHLLEIMDQYKDALPWKEVYPISALEGNNVDELLTTLKGQLPEGPQYYPSDQITDHPERFIISELIREKVLELTRQEVPHSTAVVIDSIKRQDEEKIHVQATIIIERSSQKGIIIGKGGSMLKKIGSLARRDIEHLLGDKVYLELWVKVQENWKDRQDLLASYGYRQDDY.

One can recognise an Era-type G domain in the interval 8–175; the sequence is HSGFVAIIGR…LTTLKGQLPE (168 aa). Residues 16–23 are G1; sequence GRPNVGKS. GTP is bound at residue 16 to 23; sequence GRPNVGKS. Residues 42-46 are G2; that stretch reads QTTRN. The G3 stretch occupies residues 63–66; it reads DTPG. Residues 63–67 and 125–128 contribute to the GTP site; these read DTPGI and NKID. The interval 125-128 is G4; the sequence is NKID. A G5 region spans residues 154 to 156; that stretch reads ISA. Positions 206 to 283 constitute a KH type-2 domain; that stretch reads TRQEVPHSTA…YLELWVKVQE (78 aa).

It belongs to the TRAFAC class TrmE-Era-EngA-EngB-Septin-like GTPase superfamily. Era GTPase family. In terms of assembly, monomer.

Its subcellular location is the cytoplasm. It localises to the cell membrane. Functionally, an essential GTPase that binds both GDP and GTP, with rapid nucleotide exchange. Plays a role in 16S rRNA processing and 30S ribosomal subunit biogenesis and possibly also in cell cycle regulation and energy metabolism. This chain is GTPase Era, found in Lactiplantibacillus plantarum (strain ATCC BAA-793 / NCIMB 8826 / WCFS1) (Lactobacillus plantarum).